A 138-amino-acid polypeptide reads, in one-letter code: Transposon Tn10 TetD protein (138 aa).

An HTH araC/xylS-type domain is found at Lys31–Asn129. 2 consecutive DNA-binding regions (H-T-H motif) follow at residues Asp48–Thr69 and Ile96–Phe119.

This Escherichia coli protein is Transposon Tn10 TetD protein (tetD).